The sequence spans 823 residues: Molybdenum cofactor sulfurase (823 aa).

Lys228 bears the N6-(pyridoxal phosphate)lysine mark. Residue Cys392 is part of the active site. The interval Ser628–Pro667 is disordered. The MOSC domain occupies Ser644–Ser819.

It belongs to the class-V pyridoxal-phosphate-dependent aminotransferase family. MOCOS subfamily. Pyridoxal 5'-phosphate serves as cofactor.

It carries out the reaction Mo-molybdopterin + L-cysteine + AH2 = thio-Mo-molybdopterin + L-alanine + A + H2O. The protein operates within cofactor biosynthesis; molybdopterin biosynthesis. Functionally, sulfurates the molybdenum cofactor. Sulfation of molybdenum is essential for xanthine dehydrogenase (XDH) and aldehyde oxidase (ADO) enzymes in which molybdenum cofactor is liganded by 1 oxygen and 1 sulfur atom in active form. In Aspergillus niger (strain ATCC MYA-4892 / CBS 513.88 / FGSC A1513), this protein is Molybdenum cofactor sulfurase.